The primary structure comprises 398 residues: Proteasome-activating nucleotidase (398 aa).

Positions 3 to 60 form a coiled coil; sequence DSEIQYLLEKLKKLEEDYYKLRELYRRLEDEKKFIESERIRYEREVRRLRSEVERLRS. ATP is bound by residues 185–190 and His-324; that span reads GTGKTL. The segment at 396–398 is docks into pockets in the proteasome alpha-ring to cause gate opening; that stretch reads MFV.

Belongs to the AAA ATPase family. Homohexamer. The hexameric complex has a two-ring architecture resembling a top hat that caps the 20S proteasome core at one or both ends. Upon ATP-binding, the C-terminus of PAN interacts with the alpha-rings of the proteasome core by binding to the intersubunit pockets.

It is found in the cytoplasm. ATPase which is responsible for recognizing, binding, unfolding and translocation of substrate proteins into the archaeal 20S proteasome core particle. Is essential for opening the gate of the 20S proteasome via an interaction with its C-terminus, thereby allowing substrate entry and access to the site of proteolysis. Thus, the C-termini of the proteasomal ATPase function like a 'key in a lock' to induce gate opening and therefore regulate proteolysis. Unfolding activity requires energy from ATP hydrolysis, whereas ATP binding alone promotes ATPase-20S proteasome association which triggers gate opening, and supports translocation of unfolded substrates. This chain is Proteasome-activating nucleotidase, found in Archaeoglobus fulgidus (strain ATCC 49558 / DSM 4304 / JCM 9628 / NBRC 100126 / VC-16).